The chain runs to 521 residues: 3,4-dihydroxyphenylacetaldehyde synthase (521 aa).

K306 carries the N6-(pyridoxal phosphate)lysine modification.

It belongs to the group II decarboxylase family. Pyridoxal 5'-phosphate serves as cofactor. In terms of tissue distribution, highly expressed in the cuticle and midgut. Low expression in the head and thorax.

The enzyme catalyses L-dopa + O2 + H2O + H(+) = 3,4-dihydroxyphenylacetaldehyde + H2O2 + NH4(+) + CO2. Catalyzes the decarboxylation-oxidative deamination of L-3,4-dihydroxyphenylalanine (L-DOPA) to 3,4-dihydroxylphenylacetaldehyde (DHPAA). Involved in cuticle development. Probably responsible for the protein cross-linking during the development of flexible cuticles. This Aedes aegypti (Yellowfever mosquito) protein is 3,4-dihydroxyphenylacetaldehyde synthase.